A 598-amino-acid polypeptide reads, in one-letter code: Phospholipase B-like protein G (598 aa).

Residues 1-24 (MIKSYYLFFIILIFLIFINNFILC) form the signal peptide. N-linked (GlcNAc...) asparagine glycans are attached at residues asparagine 50, asparagine 98, asparagine 173, asparagine 341, asparagine 368, asparagine 450, asparagine 480, asparagine 526, and asparagine 576.

The protein belongs to the phospholipase B-like family.

Its subcellular location is the secreted. Its function is as follows. Probable phospholipase. In Dictyostelium discoideum (Social amoeba), this protein is Phospholipase B-like protein G (plbG).